The primary structure comprises 388 residues: Formate-dependent phosphoribosylglycinamide formyltransferase (388 aa).

N(1)-(5-phospho-beta-D-ribosyl)glycinamide-binding positions include 20-21 and E80; that span reads EL. ATP contacts are provided by residues R112, K153, 158-163, 193-196, and E201; these read SSGKGQ and EEFI. The region spanning 117–306 is the ATP-grasp domain; that stretch reads RLAFEKLGLR…EFEIHARAIL (190 aa). Positions 265 and 277 each coordinate Mg(2+). N(1)-(5-phospho-beta-D-ribosyl)glycinamide is bound by residues D284, K352, and 359-360; that span reads RR.

The protein belongs to the PurK/PurT family. In terms of assembly, homodimer.

It catalyses the reaction N(1)-(5-phospho-beta-D-ribosyl)glycinamide + formate + ATP = N(2)-formyl-N(1)-(5-phospho-beta-D-ribosyl)glycinamide + ADP + phosphate + H(+). Its pathway is purine metabolism; IMP biosynthesis via de novo pathway; N(2)-formyl-N(1)-(5-phospho-D-ribosyl)glycinamide from N(1)-(5-phospho-D-ribosyl)glycinamide (formate route): step 1/1. Its function is as follows. Involved in the de novo purine biosynthesis. Catalyzes the transfer of formate to 5-phospho-ribosyl-glycinamide (GAR), producing 5-phospho-ribosyl-N-formylglycinamide (FGAR). Formate is provided by PurU via hydrolysis of 10-formyl-tetrahydrofolate. In Methanococcus maripaludis (strain C7 / ATCC BAA-1331), this protein is Formate-dependent phosphoribosylglycinamide formyltransferase.